The sequence spans 70 residues: Large ribosomal subunit protein uL29 (70 aa).

The protein belongs to the universal ribosomal protein uL29 family.

This is Large ribosomal subunit protein uL29 from Clostridium botulinum (strain Eklund 17B / Type B).